The chain runs to 283 residues: MAITAAQVKELRDRTGAGMMDCKNALTETDGDIELAIDNMRKSGAAKAAKKAGNIAADGTILIKNGEGFAALLEVNCQTDFVAKDSNFLAFANAVLDVAAASKVSIEDLKAQFEETRVALVTKIGENINVRRVEYIDGANLASYRHGDRIGVVVAGEADEETLKHIAMHVAASKPDFVNPEDVPAELVEREQALQIEIAMNEGKPAEIAEKMVVGRMKKFTGEISLTGQAFIMEPKKTVGEVLKSKGATVTSFIRLEVGEGIEKKAEDFAAEVAAQIAATKKA.

The segment at 79–82 (TDFV) is involved in Mg(2+) ion dislocation from EF-Tu.

The protein belongs to the EF-Ts family.

It is found in the cytoplasm. Its function is as follows. Associates with the EF-Tu.GDP complex and induces the exchange of GDP to GTP. It remains bound to the aminoacyl-tRNA.EF-Tu.GTP complex up to the GTP hydrolysis stage on the ribosome. The sequence is that of Elongation factor Ts from Shewanella frigidimarina (strain NCIMB 400).